A 513-amino-acid polypeptide reads, in one-letter code: 2-isopropylmalate synthase (513 aa).

Residues 5–268 (LIIFDTTLRD…DVGVDTTQIV (264 aa)) form the Pyruvate carboxyltransferase domain. The Mn(2+) site is built by D14, H202, H204, and N239. A regulatory domain region spans residues 394–513 (RFVSLSQRSE…KSSEKLNPQI (120 aa)).

It belongs to the alpha-IPM synthase/homocitrate synthase family. LeuA type 1 subfamily. As to quaternary structure, homodimer. Mn(2+) is required as a cofactor.

Its subcellular location is the cytoplasm. It carries out the reaction 3-methyl-2-oxobutanoate + acetyl-CoA + H2O = (2S)-2-isopropylmalate + CoA + H(+). Its pathway is amino-acid biosynthesis; L-leucine biosynthesis; L-leucine from 3-methyl-2-oxobutanoate: step 1/4. Its function is as follows. Catalyzes the condensation of the acetyl group of acetyl-CoA with 3-methyl-2-oxobutanoate (2-ketoisovalerate) to form 3-carboxy-3-hydroxy-4-methylpentanoate (2-isopropylmalate). This is 2-isopropylmalate synthase from Ralstonia nicotianae (strain ATCC BAA-1114 / GMI1000) (Ralstonia solanacearum).